The sequence spans 424 residues: STAM-binding protein (424 aa).

The tract at residues 1–127 (MSDHGDVSLP…YTEYNEEKKK (127 aa)) is interaction with CHMP3. Phosphoserine is present on residues Ser2 and Ser48. The segment at 227-231 (PAKPP) is interaction with STAM. Ser243, Ser245, and Ser247 each carry phosphoserine. The 132-residue stretch at 257–388 (VVVPGRLCPQ…LTDHGLEEIS (132 aa)) folds into the MPN domain. Positions 335, 337, 348, 350, 390, 396, and 398 each coordinate Zn(2+). The short motif at 335-348 (HTHPTQTAFLSSVD) is the JAMM motif element.

Belongs to the peptidase M67C family. As to quaternary structure, interacts with STAM. Interacts with SMAD6 and SMAD7. Interacts with CHMP3; the interaction appears to relieve the autoinhibition of CHMP3. Interacts with SMURF2 and RNF11; this interaction promotes ubiquitination. Zn(2+) serves as cofactor. Phosphorylated after BMP type I receptor activation. In terms of processing, ubiquitinated by SMURF2 in the presence of RNF11. In terms of tissue distribution, ubiquitously expressed.

It localises to the nucleus. It is found in the membrane. The protein localises to the cytoplasm. Its subcellular location is the early endosome. Inhibited by N-ethylmaleimide. Strongly and specifically inhibited by ubiquitin variants UbV(SP.2) and UbV(SP.3). Also inhibited by UbV(SP.1); an ubiquitin variant that also inhibits STAMBPL1. Zinc metalloprotease that specifically cleaves 'Lys-63'-linked polyubiquitin chains. Does not cleave 'Lys-48'-linked polyubiquitin chains. Plays a role in signal transduction for cell growth and MYC induction mediated by IL-2 and GM-CSF. Potentiates BMP (bone morphogenetic protein) signaling by antagonizing the inhibitory action of SMAD6 and SMAD7. Has a key role in regulation of cell surface receptor-mediated endocytosis and ubiquitin-dependent sorting of receptors to lysosomes. Endosomal localization of STAMBP is required for efficient EGFR degradation but not for its internalization. Involved in the negative regulation of PI3K-AKT-mTOR and RAS-MAP signaling pathways. This Homo sapiens (Human) protein is STAM-binding protein (STAMBP).